Reading from the N-terminus, the 103-residue chain is uncharacterized protein (103 aa).

A helical membrane pass occupies residues 37–57 (FILLSSLLIGGLLITIACYHI).

It localises to the membrane. This is an uncharacterized protein from Saccharomyces cerevisiae (strain ATCC 204508 / S288c) (Baker's yeast).